The primary structure comprises 53 residues: Putative defensin-like protein 53 (53 aa).

4 cysteine pairs are disulfide-bonded: Cys-12/Cys-51, Cys-16/Cys-40, Cys-26/Cys-49, and Cys-30/Cys-50.

The protein belongs to the DEFL family.

This is Putative defensin-like protein 53 from Arabidopsis thaliana (Mouse-ear cress).